A 118-amino-acid chain; its full sequence is Large ribosomal subunit protein bL17 (118 aa).

It belongs to the bacterial ribosomal protein bL17 family. In terms of assembly, part of the 50S ribosomal subunit. Contacts protein L32.

The sequence is that of Large ribosomal subunit protein bL17 from Phytoplasma australiense.